The primary structure comprises 474 residues: Transcription factor SOX-4 (474 aa).

The segment covering 1–10 (MVQQTNNAEN) has biased composition (polar residues). The segment at 1–58 (MVQQTNNAENTEALLAGESSDSGAGLELGIASSPTPGSTASTGGKADDPSWCKTPSGH) is disordered. Positions 31–44 (ASSPTPGSTASTGG) are enriched in low complexity. Positions 59–127 (IKRPMNAFMV…KHMADYPDYK (69 aa)) form a DNA-binding region, HMG box. Residue Lys95 is modified to N6-acetyllysine. 3 disordered regions span residues 128–228 (YRPR…GGGK), 262–286 (ARTPSASASASSAASASAALAAPGK), and 302–416 (LGTS…NFES). A compositionally biased stretch (low complexity) spans 138–149 (NANSSSSAAASS). Gly residues predominate over residues 158-189 (VGGSGGGGHGGGGGGGSSNAGGGGGGASGGGA). Low complexity-rich tracts occupy residues 266–283 (SASASASSAASASAALAA), 304–320 (TSSSPVGGVGAGADPSD), 336–354 (APSLSGRSSAASSPAAGRS), and 366–396 (AASPAPSSAPSHASSSASSHSSSSSSSGSSS). Positions 397–406 (SDDEFEDDLL) are enriched in acidic residues. Residues 407-416 (DLNPSSNFES) show a composition bias toward low complexity. A 9aaTAD motif is present at residues 426–434 (SALDRDLDF).

In terms of assembly, interacts with UBE2I. Interacts with HDAC1; interaction inhibits the transcriptional activator activity. In terms of processing, acetylation at Lys-95 by KAT5 promotes the transcription activator activity and is required during myoblast differentiation. Acetylation by KAT5 abolishes the interaction between SOX4 and HDAC1 and switches SOX4 into a transcriptional activator. In terms of tissue distribution, testis, brain, and heart.

The protein resides in the nucleus. Functionally, transcriptional activator that binds with high affinity to the T-cell enhancer motif 5'-AACAAAG-3' motif. Required for IL17A-producing Vgamma2-positive gamma-delta T-cell maturation and development, via binding to regulator loci of RORC to modulate expression. Involved in skeletal myoblast differentiation by promoting gene expression of CALD1. This chain is Transcription factor SOX-4, found in Homo sapiens (Human).